The following is a 480-amino-acid chain: Aspartyl/glutamyl-tRNA(Asn/Gln) amidotransferase subunit B (480 aa).

The protein belongs to the GatB/GatE family. GatB subfamily. As to quaternary structure, heterotrimer of A, B and C subunits.

The catalysed reaction is L-glutamyl-tRNA(Gln) + L-glutamine + ATP + H2O = L-glutaminyl-tRNA(Gln) + L-glutamate + ADP + phosphate + H(+). It carries out the reaction L-aspartyl-tRNA(Asn) + L-glutamine + ATP + H2O = L-asparaginyl-tRNA(Asn) + L-glutamate + ADP + phosphate + 2 H(+). In terms of biological role, allows the formation of correctly charged Asn-tRNA(Asn) or Gln-tRNA(Gln) through the transamidation of misacylated Asp-tRNA(Asn) or Glu-tRNA(Gln) in organisms which lack either or both of asparaginyl-tRNA or glutaminyl-tRNA synthetases. The reaction takes place in the presence of glutamine and ATP through an activated phospho-Asp-tRNA(Asn) or phospho-Glu-tRNA(Gln). The sequence is that of Aspartyl/glutamyl-tRNA(Asn/Gln) amidotransferase subunit B from Streptococcus pneumoniae (strain CGSP14).